A 355-amino-acid polypeptide reads, in one-letter code: Phenylalanine--tRNA ligase alpha subunit (355 aa).

Mg(2+) is bound at residue glutamate 273.

The protein belongs to the class-II aminoacyl-tRNA synthetase family. Phe-tRNA synthetase alpha subunit type 1 subfamily. Tetramer of two alpha and two beta subunits. The cofactor is Mg(2+).

The protein resides in the cytoplasm. The enzyme catalyses tRNA(Phe) + L-phenylalanine + ATP = L-phenylalanyl-tRNA(Phe) + AMP + diphosphate + H(+). The chain is Phenylalanine--tRNA ligase alpha subunit from Bifidobacterium animalis subsp. lactis (strain AD011).